Consider the following 234-residue polypeptide: ATP synthase subunit a 1 (234 aa).

Helical transmembrane passes span 20–40, 76–96, 105–125, 162–184, and 195–215; these read ETVV…ILLT, LLPL…LGVI, DLSV…AYGV, LFGN…GFLA, and EALV…AGAM.

This sequence belongs to the ATPase A chain family. F-type ATPases have 2 components, CF(1) - the catalytic core - and CF(0) - the membrane proton channel. CF(1) has five subunits: alpha(3), beta(3), gamma(1), delta(1), epsilon(1). CF(0) has three main subunits: a(1), b(2) and c(9-12). The alpha and beta chains form an alternating ring which encloses part of the gamma chain. CF(1) is attached to CF(0) by a central stalk formed by the gamma and epsilon chains, while a peripheral stalk is formed by the delta and b chains.

The protein localises to the cell inner membrane. Key component of the proton channel; it plays a direct role in the translocation of protons across the membrane. This Hahella chejuensis (strain KCTC 2396) protein is ATP synthase subunit a 1.